A 449-amino-acid chain; its full sequence is UDP-N-acetylmuramoylalanine--D-glutamate ligase (449 aa).

An ATP-binding site is contributed by 118–124 (GSNGKTT).

Belongs to the MurCDEF family.

The protein localises to the cytoplasm. The enzyme catalyses UDP-N-acetyl-alpha-D-muramoyl-L-alanine + D-glutamate + ATP = UDP-N-acetyl-alpha-D-muramoyl-L-alanyl-D-glutamate + ADP + phosphate + H(+). The protein operates within cell wall biogenesis; peptidoglycan biosynthesis. Functionally, cell wall formation. Catalyzes the addition of glutamate to the nucleotide precursor UDP-N-acetylmuramoyl-L-alanine (UMA). The protein is UDP-N-acetylmuramoylalanine--D-glutamate ligase of Oceanobacillus iheyensis (strain DSM 14371 / CIP 107618 / JCM 11309 / KCTC 3954 / HTE831).